Consider the following 103-residue polypeptide: Large ribosomal subunit protein uL24 (103 aa).

The protein belongs to the universal ribosomal protein uL24 family. Part of the 50S ribosomal subunit.

Functionally, one of two assembly initiator proteins, it binds directly to the 5'-end of the 23S rRNA, where it nucleates assembly of the 50S subunit. In terms of biological role, one of the proteins that surrounds the polypeptide exit tunnel on the outside of the subunit. The protein is Large ribosomal subunit protein uL24 of Treponema pallidum (strain Nichols).